A 230-amino-acid chain; its full sequence is GTP cyclohydrolase III (230 aa).

Belongs to the archaeal-type GTP cyclohydrolase family.

The enzyme catalyses GTP + 3 H2O = 2-amino-5-formylamino-6-(5-phospho-D-ribosylamino)pyrimidin-4(3H)-one + 2 phosphate + 2 H(+). Functionally, catalyzes the formation of 2-amino-5-formylamino-6-ribofuranosylamino-4(3H)-pyrimidinone ribonucleotide monophosphate and inorganic phosphate from GTP. Also has an independent pyrophosphate phosphohydrolase activity. The sequence is that of GTP cyclohydrolase III from Saccharolobus islandicus (strain M.16.27) (Sulfolobus islandicus).